A 332-amino-acid chain; its full sequence is NADH-quinone oxidoreductase subunit H (332 aa).

8 helical membrane-spanning segments follow: residues 11 to 31 (TYKILFLLVPVLVSVAMIVWL), 77 to 97 (VIFILAPIVTMTLALVSWAVI), 110 to 130 (VGVLYLFAVSSLGVYGIIMGG), 156 to 176 (IGVIIINVLLCVGSLNLNDII), 182 to 202 (LWFIIPLFPMFVIFFISALAE), 240 to 260 (NILLMCAMGSILFLGGWLSPI), 268 to 288 (IPGAIWMIFKILFLFVLFALV), and 307 to 327 (IFLPLSLTWVVLTASYLFYFN).

Belongs to the complex I subunit 1 family. NDH-1 is composed of 14 different subunits. Subunits NuoA, H, J, K, L, M, N constitute the membrane sector of the complex.

It localises to the cell inner membrane. It carries out the reaction a quinone + NADH + 5 H(+)(in) = a quinol + NAD(+) + 4 H(+)(out). Its function is as follows. NDH-1 shuttles electrons from NADH, via FMN and iron-sulfur (Fe-S) centers, to quinones in the respiratory chain. The immediate electron acceptor for the enzyme in this species is believed to be ubiquinone. Couples the redox reaction to proton translocation (for every two electrons transferred, four hydrogen ions are translocated across the cytoplasmic membrane), and thus conserves the redox energy in a proton gradient. This subunit may bind ubiquinone. This chain is NADH-quinone oxidoreductase subunit H, found in Pelagibacter ubique (strain HTCC1062).